Consider the following 58-residue polypeptide: UPF0391 membrane protein Sputcn32_1322 (58 aa).

Helical transmembrane passes span 6–26 (LMFLVVAIIAGLFGFTGIAGA) and 28–48 (AGIAKIIFFLFIVLLVISLLV).

The protein belongs to the UPF0391 family.

It is found in the cell membrane. This Shewanella putrefaciens (strain CN-32 / ATCC BAA-453) protein is UPF0391 membrane protein Sputcn32_1322.